We begin with the raw amino-acid sequence, 267 residues long: Putative carbamate hydrolase RutD (267 aa).

One can recognise an AB hydrolase-1 domain in the interval 14 to 115 (PVMVMISGLG…SALVIINGWL (102 aa)).

The protein belongs to the AB hydrolase superfamily. Hydrolase RutD family.

The enzyme catalyses carbamate + 2 H(+) = NH4(+) + CO2. In terms of biological role, involved in pyrimidine catabolism. May facilitate the hydrolysis of carbamate, a reaction that can also occur spontaneously. This Cronobacter turicensis (strain DSM 18703 / CCUG 55852 / LMG 23827 / z3032) protein is Putative carbamate hydrolase RutD.